The following is a 1048-amino-acid chain: [F-actin]-monooxygenase MICAL1 (1048 aa).

The tract at residues 1-489 (MASPASTNPA…QDLYDMMDKE (489 aa)) is monooxygenase domain. Residues Cys-95, 114 to 116 (EKR), 121 to 123 (RHN), Phe-181, Tyr-293, and Asp-393 contribute to the FAD site. Phosphothreonine is present on Thr-475. Basic and acidic residues predominate over residues 488-502 (KEHAQRKSDEPDSRK). Residues 488 to 508 (KEHAQRKSDEPDSRKTTTGSA) form a disordered region. The region spanning 507–611 (SAGTEELLHW…YLSHFHSAFK (105 aa)) is the Calponin-homology (CH) domain. Ser-616 carries the phosphoserine modification. Residues 643 to 676 (TRAKVDEETPSTEEPPVSEPSMSPNTPELSEHQE) are disordered. Positions 654–666 (TEEPPVSEPSMSP) are enriched in low complexity. Residues 681-743 (ELCELCGKHL…LQHLPQEDQK (63 aa)) enclose the LIM zinc-binding domain. Residues Cys-683, Cys-686, His-704, Cys-707, Cys-710, Cys-713, Cys-733, and His-736 each coordinate Zn(2+). Disordered stretches follow at residues 741–787 (DQKE…QPAR), 805–825 (IIPD…SDLA), and 839–873 (PVQA…PPLE). The span at 747–765 (NNGSLESQELPTPGDSNMQ) shows a compositional bias: polar residues. Low complexity predominate over residues 772-787 (PVTRVSPVPSPSQPAR). Residues Ser-777 and Ser-781 each carry the phosphoserine modification. Coiled-coil stretches lie at residues 847-867 (EAIE…EEEE), 906-949 (EEEM…ESSS), and 974-1031 (EEAE…VNQR). Residues 852–868 (GDDEEEEEEEEEEEEEP) show a composition bias toward acidic residues. Residues 905-1048 (KEEEMKRFCK…EERRLREMPA (144 aa)) form the bMERB domain.

The protein belongs to the Mical family. Associates with the SH3 domain of NEDD9. Interacts with VIM and PLXNA3. Interacts with RAB1B, RAB8A, RAB10, RAB13 and RAB15 (in their GTP-bound forms); binding to RAB1B is of low affinity compared to other Rab proteins; at least in case of RAB8A and RAB10 can bind 2 molecules of the Rab proteins simultaneously. Interacts with STK38 and STK38L. Interacts with GRAF1/ARHGAP26, GRAF2/ARHGAP10, RAB8A, RAB8B and RAB10; may bind simultaneously to GRAFs and Rabs and connects GRAFs to Rabs. Does not interact with RAB1 and RAB11A. It depends on FAD as a cofactor. Expressed in the postnatal and adult hippocampus; found in dentate gyrus, the polymorphic layer, cornu ammonis (CA) 1-3 and in mossy fibers of the striatum lucidum. In adult hippocampus strongly expressed in CA3 pyramidial neurons.

The protein resides in the cytoplasm. It localises to the cytoskeleton. It is found in the endosome membrane. Its subcellular location is the midbody. The catalysed reaction is L-methionyl-[F-actin] + NADPH + O2 + H(+) = L-methionyl-(R)-S-oxide-[F-actin] + NADP(+) + H2O. It catalyses the reaction NADPH + O2 + H(+) = H2O2 + NADP(+). Its function is as follows. Monooxygenase that promotes depolymerization of F-actin by mediating oxidation of specific methionine residues on actin to form methionine-sulfoxide, resulting in actin filament disassembly and preventing repolymerization. In the absence of actin, it also functions as a NADPH oxidase producing H(2)O(2). Acts as a cytoskeletal regulator that connects NEDD9 to intermediate filaments. Also acts as a negative regulator of apoptosis via its interaction with STK38 and STK38L; acts by antagonizing STK38 and STK38L activation by MST1/STK4. Involved in regulation of lamina-specific connectivity in the nervous system such as the development of lamina-restricted hippocampal connections. Through redox regulation of the actin cytoskeleton controls the intracellular distribution of secretory vesicles containing L1/neurofascin/NgCAM family proteins in neurons, thereby regulating their cell surface levels. May act as Rab effector protein and play a role in vesicle trafficking. Promotes endosomal tubule extension by associating with RAB8 (RAB8A or RAB8B), RAB10 and GRAF (GRAF1/ARHGAP26 or GRAF2/ARHGAP10) on the endosomal membrane which may connect GRAFs to Rabs, thereby participating in neosynthesized Rab8-Rab10-Rab11-dependent protein export. The protein is [F-actin]-monooxygenase MICAL1 (Mical1) of Mus musculus (Mouse).